An 899-amino-acid chain; its full sequence is Bifunctional uridylyltransferase/uridylyl-removing enzyme (899 aa).

The segment at 1–347 (MFISDPTDSL…PESERPEKSV (347 aa)) is uridylyltransferase. Positions 348-718 (LNARFNRVGD…EHRELALDAV (371 aa)) are uridylyl-removing. An HD domain is found at 465–581 (VDAHILLLIR…TKFANLVGNV (117 aa)). 2 ACT domains span residues 719–804 (QIFI…RLPR) and 827–899 (VMSL…TPSC).

This sequence belongs to the GlnD family. Mg(2+) serves as cofactor.

It catalyses the reaction [protein-PII]-L-tyrosine + UTP = [protein-PII]-uridylyl-L-tyrosine + diphosphate. It carries out the reaction [protein-PII]-uridylyl-L-tyrosine + H2O = [protein-PII]-L-tyrosine + UMP + H(+). With respect to regulation, uridylyltransferase (UTase) activity is inhibited by glutamine, while glutamine activates uridylyl-removing (UR) activity. Its function is as follows. Modifies, by uridylylation and deuridylylation, the PII regulatory proteins (GlnB and homologs), in response to the nitrogen status of the cell that GlnD senses through the glutamine level. Under low glutamine levels, catalyzes the conversion of the PII proteins and UTP to PII-UMP and PPi, while under higher glutamine levels, GlnD hydrolyzes PII-UMP to PII and UMP (deuridylylation). Thus, controls uridylylation state and activity of the PII proteins, and plays an important role in the regulation of nitrogen assimilation and metabolism. The polypeptide is Bifunctional uridylyltransferase/uridylyl-removing enzyme (Psychrobacter sp. (strain PRwf-1)).